Reading from the N-terminus, the 362-residue chain is Sterol-4-alpha-carboxylate 3-dehydrogenase, decarboxylating (362 aa).

An N-acetylmethionine modification is found at Met-1. Tyr-161 (proton acceptor) is an active-site residue. Lys-165 contacts NAD(+). A helical membrane pass occupies residues 287 to 307; it reads WMAYYLAFLLSLLVMVVSPLI. The Prevents secretion from ER signature appears at 359 to 362; that stretch reads RKDK.

Belongs to the 3-beta-HSD family. In terms of assembly, homodimer.

The protein resides in the endoplasmic reticulum membrane. It localises to the lipid droplet. The enzyme catalyses a 3beta-hydroxysteroid-4alpha-carboxylate + NADP(+) = a 3-oxosteroid + CO2 + NADPH. It catalyses the reaction a 3beta-hydroxysteroid-4alpha-carboxylate + NAD(+) = a 3-oxosteroid + CO2 + NADH. The catalysed reaction is 4alpha-carboxyzymosterol + NADP(+) = zymosterone + CO2 + NADPH. It carries out the reaction 4alpha-carboxy-4beta-methyl-5alpha-cholest-8-en-3beta-ol + NADP(+) = 4alpha-methyl-5alpha-cholest-8-en-3-one + CO2 + NADPH. The enzyme catalyses 4alpha-carboxy-5alpha-cholest-8-ene-3beta-ol + NADP(+) = 5alpha-cholest-8-en-3-one + CO2 + NADPH. It catalyses the reaction 4beta-methylzymosterol-4alpha-carboxylate + NADP(+) = 3-dehydro-4-methylzymosterol + CO2 + NADPH. The catalysed reaction is 4beta-methylzymosterol-4alpha-carboxylate + NAD(+) = 3-dehydro-4-methylzymosterol + CO2 + NADH. It carries out the reaction 4alpha-carboxy-5alpha-cholest-8-ene-3beta-ol + NAD(+) = 5alpha-cholest-8-en-3-one + CO2 + NADH. The enzyme catalyses 4alpha-carboxy-4beta-methyl-5alpha-cholest-8-en-3beta-ol + NAD(+) = 4alpha-methyl-5alpha-cholest-8-en-3-one + CO2 + NADH. It catalyses the reaction 4alpha-carboxyzymosterol + NAD(+) = zymosterone + CO2 + NADH. It participates in steroid biosynthesis; zymosterol biosynthesis; zymosterol from lanosterol: step 4/6. Catalyzes the NAD(P)(+)-dependent oxidative decarboxylation of the C4 methyl groups of 4-alpha-carboxysterols in post-squalene cholesterol biosynthesis. Plays a role in the regulation of the endocytic trafficking of EGFR. In Mus musculus (Mouse), this protein is Sterol-4-alpha-carboxylate 3-dehydrogenase, decarboxylating (Nsdhl).